The following is a 138-amino-acid chain: Small ribosomal subunit protein uS11c (138 aa).

The tract at residues 1–24 is disordered; sequence MIKPIPRISSRRNGRIGSRKTGRR. Over residues 9-24 the composition is skewed to basic residues; it reads SSRRNGRIGSRKTGRR.

The protein belongs to the universal ribosomal protein uS11 family. In terms of assembly, part of the 30S ribosomal subunit.

It localises to the plastid. Its subcellular location is the chloroplast. In Lemna minor (Common duckweed), this protein is Small ribosomal subunit protein uS11c.